Consider the following 289-residue polypeptide: MEANVTIPIWQNKPHGAARSVVRRIGTNLPLKPCPRASFETLPNISDLCLRDVPPVPTLADIAWIAADEEETYARVRSDTRPLRHTWKPSPLIVMQRNASVPNLRGSEERLLALKKPALPALSRTTELQDELSHLRSQIAKIVAADAASASLTPDFLSPGSSNVSSPLPCFGSSFHSTTSFVISDITEETEIEVPELPSVPLLCSASPECCKPEHKATCSSSEEDDCVSLSKASSFADMMGILKDFHRMKQSQDLSRSSLKEEDPAVLISEVLRRKFALKEEDISRKGN.

The residue at position 27 (T27) is a Phosphothreonine. 8 positions are modified to phosphoserine: S38, S100, S107, S221, S222, S235, S258, and S270.

This sequence belongs to the MTFR1 family. In terms of processing, phosphorylated by AMPK. Upon stress, phosphorylation by AMPK is sufficient to induce mitochondrial fragmentation.

Its subcellular location is the mitochondrion outer membrane. Its function is as follows. Mitochondrial protein required for adaptation of miochondrial dynamics to metabolic changes. Regulates mitochondrial morphology at steady state and mediates AMPK-dependent stress-induced mitochondrial fragmentation via the control of OPA1 levels. This chain is Mitochondrial fission regulator 1-like (MTFR1L), found in Bos taurus (Bovine).